The sequence spans 229 residues: 7-cyano-7-deazaguanine synthase (229 aa).

ATP is bound at residue 7–17 (LSGGLDSSTIL). Zn(2+) is bound by residues Cys191, Cys199, Cys202, and Cys205.

It belongs to the QueC family. Zn(2+) serves as cofactor.

It carries out the reaction 7-carboxy-7-deazaguanine + NH4(+) + ATP = 7-cyano-7-deazaguanine + ADP + phosphate + H2O + H(+). It participates in purine metabolism; 7-cyano-7-deazaguanine biosynthesis. Functionally, catalyzes the ATP-dependent conversion of 7-carboxy-7-deazaguanine (CDG) to 7-cyano-7-deazaguanine (preQ(0)). The sequence is that of 7-cyano-7-deazaguanine synthase from Nostoc sp. (strain PCC 7120 / SAG 25.82 / UTEX 2576).